We begin with the raw amino-acid sequence, 379 residues long: 1-deoxy-D-xylulose 5-phosphate reductoisomerase (379 aa).

Positions 10, 11, 12, 13, 39, and 121 each coordinate NADPH. K122 provides a ligand contact to 1-deoxy-D-xylulose 5-phosphate. E123 contributes to the NADPH binding site. D147 lines the Mn(2+) pocket. 1-deoxy-D-xylulose 5-phosphate is bound by residues S148, E149, S173, and H196. E149 provides a ligand contact to Mn(2+). G202 serves as a coordination point for NADPH. Positions 209, 214, 215, and 218 each coordinate 1-deoxy-D-xylulose 5-phosphate. E218 contributes to the Mn(2+) binding site.

This sequence belongs to the DXR family. It depends on Mg(2+) as a cofactor. The cofactor is Mn(2+).

The catalysed reaction is 2-C-methyl-D-erythritol 4-phosphate + NADP(+) = 1-deoxy-D-xylulose 5-phosphate + NADPH + H(+). Its pathway is isoprenoid biosynthesis; isopentenyl diphosphate biosynthesis via DXP pathway; isopentenyl diphosphate from 1-deoxy-D-xylulose 5-phosphate: step 1/6. Its function is as follows. Catalyzes the NADPH-dependent rearrangement and reduction of 1-deoxy-D-xylulose-5-phosphate (DXP) to 2-C-methyl-D-erythritol 4-phosphate (MEP). The chain is 1-deoxy-D-xylulose 5-phosphate reductoisomerase from Chlamydia felis (strain Fe/C-56) (Chlamydophila felis).